The primary structure comprises 394 residues: Protein TsgA homolog (394 aa).

Transmembrane regions (helical) follow at residues 11–31 (WISYLSYALTGALVIVTGIVM), 51–71 (FLNAGILISIFLNAWLMEIIP), 76–96 (LVFGFILMLIAIAGLMVGHNL), 101–121 (ISMFIFGVVSGITMSIGTFLV), 134–154 (LLFTDSFFSMAGMIFPIAAAM), 162–182 (WYWVYACIGLLYVGIFVLTLC), 206–226 (VGVLFLAIAALCYILGQLGFI), 246–266 (QLVSNFWISYMIGMWIFSFIL), 274–294 (IVTVLAAMATLAMYLFVSTDN), 302–322 (ILALGFVSSAIYTTLITLGSL), 334–354 (FILTCGTVGTMLTFVVTGPIV), and 363–383 (LATANGLYLAVFILCLALGFF).

This sequence belongs to the major facilitator superfamily. TsgA family.

The protein resides in the cell inner membrane. The protein is Protein TsgA homolog of Yersinia pseudotuberculosis serotype O:1b (strain IP 31758).